The sequence spans 402 residues: Elongation factor Tu (402 aa).

Residues 16 to 211 (KEHINIGTIG…AVDSYIDSPV (196 aa)) form the tr-type G domain. The G1 stretch occupies residues 25 to 32 (GHVDHGKT). Residue 25–32 (GHVDHGKT) participates in GTP binding. Threonine 32 is a binding site for Mg(2+). Positions 66 to 70 (GITIN) are G2. Positions 87-90 (DCPG) are G3. GTP is bound by residues 87-91 (DCPGH) and 142-145 (NKID). The interval 142–145 (NKID) is G4. The tract at residues 181 to 183 (SAR) is G5.

This sequence belongs to the TRAFAC class translation factor GTPase superfamily. Classic translation factor GTPase family. EF-Tu/EF-1A subfamily. As to quaternary structure, monomer.

It localises to the cytoplasm. It carries out the reaction GTP + H2O = GDP + phosphate + H(+). Its function is as follows. GTP hydrolase that promotes the GTP-dependent binding of aminoacyl-tRNA to the A-site of ribosomes during protein biosynthesis. In Mesomycoplasma hyopneumoniae (strain 232) (Mycoplasma hyopneumoniae), this protein is Elongation factor Tu.